We begin with the raw amino-acid sequence, 386 residues long: DNase toxin Tse7 (386 aa).

In terms of assembly, interacts with Tsi7.

The catalysed reaction is Endonucleolytic cleavage to 5'-phosphodinucleotide and 5'-phosphooligonucleotide end-products.. Its function is as follows. Type VI secretion exported toxin that via to its DNase activity induces growth arrest and ultimately DNA degradation within target cell. The activity is initially neutralized by a cognate immunity protein Tsi7. The polypeptide is DNase toxin Tse7 (Pseudomonas aeruginosa (strain ATCC 15692 / DSM 22644 / CIP 104116 / JCM 14847 / LMG 12228 / 1C / PRS 101 / PAO1)).